Reading from the N-terminus, the 616-residue chain is tRNA 5-methylaminomethyl-2-thiouridine biosynthesis bifunctional protein MnmC (616 aa).

Residues 1-232 (MLRTIVPARL…KRHCMSARFA (232 aa)) form a tRNA (mnm(5)s(2)U34)-methyltransferase region. The interval 249–616 (IGGGVAGAAA…ARFAGNRKTA (368 aa)) is FAD-dependent cmnm(5)s(2)U34 oxidoreductase.

The protein in the N-terminal section; belongs to the methyltransferase superfamily. tRNA (mnm(5)s(2)U34)-methyltransferase family. In the C-terminal section; belongs to the DAO family. FAD is required as a cofactor.

The protein resides in the cytoplasm. The enzyme catalyses 5-aminomethyl-2-thiouridine(34) in tRNA + S-adenosyl-L-methionine = 5-methylaminomethyl-2-thiouridine(34) in tRNA + S-adenosyl-L-homocysteine + H(+). Its function is as follows. Catalyzes the last two steps in the biosynthesis of 5-methylaminomethyl-2-thiouridine (mnm(5)s(2)U) at the wobble position (U34) in tRNA. Catalyzes the FAD-dependent demodification of cmnm(5)s(2)U34 to nm(5)s(2)U34, followed by the transfer of a methyl group from S-adenosyl-L-methionine to nm(5)s(2)U34, to form mnm(5)s(2)U34. In Thiobacillus denitrificans (strain ATCC 25259 / T1), this protein is tRNA 5-methylaminomethyl-2-thiouridine biosynthesis bifunctional protein MnmC.